The following is a 633-amino-acid chain: Guanylate-binding protein 6 (633 aa).

Positions 1-310 (MESGPKMLAP…EAVNSGAVPC (310 aa)) are GTPase domain (Globular). The region spanning 35 to 277 (SQPVVVVAIV…FSSYIFTHAR (243 aa)) is the GB1/RHD3-type G domain. Residues 45–52 (GLYRTGKS), 67–69 (LGS), and 97–101 (DTEGL) contribute to the GTP site.

It belongs to the TRAFAC class dynamin-like GTPase superfamily. GB1/RHD3 GTPase family. GB1 subfamily.

It localises to the cytoplasmic vesicle. The enzyme catalyses GTP + H2O = GDP + phosphate + H(+). Interferon (IFN)-inducible GTPase that plays important roles in innate immunity against a diverse range of bacterial, viral and protozoan pathogens, such as bacterial pathogens Listeria monocytogenes and Mycobacterium bovis BCG as well as the protozoan pathogen Toxoplasma gondii. Confers protection to several pathogens, including the bacterial pathogens Listeria monocytogenes and Mycobacterium bovis BCG as well as the protozoan pathogen Toxoplasma gondii. The protein is Guanylate-binding protein 6 (GBP6) of Pongo abelii (Sumatran orangutan).